A 448-amino-acid chain; its full sequence is Chromosomal replication initiator protein DnaA (448 aa).

The segment at 1 to 93 is domain I, interacts with DnaA modulators; the sequence is MEQIVSSLWS…KPTEQNLSAS (93 aa). Residues 94 to 110 form a domain II region; the sequence is STNKEELTQDTVHKFKT. The interval 111–328 is domain III, AAA+ region; that stretch reads GLNGRLTFDN…GAINRVSAWC (218 aa). ATP contacts are provided by glycine 156, glycine 158, lysine 159, and threonine 160. Residues 329-448 form a domain IV, binds dsDNA region; the sequence is NFTKRQITID…YTNLTRKLSS (120 aa).

The protein belongs to the DnaA family. In terms of assembly, oligomerizes as a right-handed, spiral filament on DNA at oriC.

Its subcellular location is the cytoplasm. In terms of biological role, plays an essential role in the initiation and regulation of chromosomal replication. ATP-DnaA binds to the origin of replication (oriC) to initiate formation of the DNA replication initiation complex once per cell cycle. Binds the DnaA box (a 9 base pair repeat at the origin) and separates the double-stranded (ds)DNA. Forms a right-handed helical filament on oriC DNA; dsDNA binds to the exterior of the filament while single-stranded (ss)DNA is stabiized in the filament's interior. The ATP-DnaA-oriC complex binds and stabilizes one strand of the AT-rich DNA unwinding element (DUE), permitting loading of DNA polymerase. After initiation quickly degrades to an ADP-DnaA complex that is not apt for DNA replication. Binds acidic phospholipids. The sequence is that of Chromosomal replication initiator protein DnaA from Haemophilus ducreyi (strain 35000HP / ATCC 700724).